The sequence spans 283 residues: Polyamine aminopropyltransferase (283 aa).

Residues 2 to 238 (ELWYTEEWTE…GHWLFGFASK (237 aa)) enclose the PABS domain. Q31 provides a ligand contact to S-methyl-5'-thioadenosine. 2 residues coordinate spermidine: H62 and D86. Residues E106 and 137–138 (DG) each bind S-methyl-5'-thioadenosine. D156 (proton acceptor) is an active-site residue. Spermidine is bound at residue 156 to 159 (DSTD). S-methyl-5'-thioadenosine is bound at residue P163.

This sequence belongs to the spermidine/spermine synthase family. Homodimer or homotetramer.

The protein localises to the cytoplasm. The catalysed reaction is S-adenosyl 3-(methylsulfanyl)propylamine + putrescine = S-methyl-5'-thioadenosine + spermidine + H(+). It functions in the pathway amine and polyamine biosynthesis; spermidine biosynthesis; spermidine from putrescine: step 1/1. Catalyzes the irreversible transfer of a propylamine group from the amino donor S-adenosylmethioninamine (decarboxy-AdoMet) to putrescine (1,4-diaminobutane) to yield spermidine. The sequence is that of Polyamine aminopropyltransferase from Clostridioides difficile (strain 630) (Peptoclostridium difficile).